Consider the following 250-residue polypeptide: Cell division protein FtsQ (250 aa).

The Cytoplasmic segment spans residues 1–11 (MWNNVRQLNLA). Residues 12–32 (ASALYALLLLVLAAAGCYWLI) traverse the membrane as a helical segment. Residues 33-250 (QRPAFALREI…FLTDTDKGKK (218 aa)) lie on the Periplasmic side of the membrane. The POTRA domain occupies 37-106 (FALREIRIDG…NALAVTLEEY (70 aa)).

This sequence belongs to the FtsQ/DivIB family. FtsQ subfamily. As to quaternary structure, part of a complex composed of FtsB, FtsL and FtsQ.

It localises to the cell inner membrane. In terms of biological role, essential cell division protein. May link together the upstream cell division proteins, which are predominantly cytoplasmic, with the downstream cell division proteins, which are predominantly periplasmic. May control correct divisome assembly. This chain is Cell division protein FtsQ, found in Burkholderia pseudomallei (strain K96243).